The chain runs to 71 residues: Small ribosomal subunit protein bS21 (71 aa).

It belongs to the bacterial ribosomal protein bS21 family.

The sequence is that of Small ribosomal subunit protein bS21 from Buchnera aphidicola subsp. Cinara cedri (strain Cc).